The chain runs to 416 residues: Gamma-glutamyl phosphate reductase (416 aa).

The protein belongs to the gamma-glutamyl phosphate reductase family.

The protein resides in the cytoplasm. It catalyses the reaction L-glutamate 5-semialdehyde + phosphate + NADP(+) = L-glutamyl 5-phosphate + NADPH + H(+). The protein operates within amino-acid biosynthesis; L-proline biosynthesis; L-glutamate 5-semialdehyde from L-glutamate: step 2/2. Catalyzes the NADPH-dependent reduction of L-glutamate 5-phosphate into L-glutamate 5-semialdehyde and phosphate. The product spontaneously undergoes cyclization to form 1-pyrroline-5-carboxylate. The protein is Gamma-glutamyl phosphate reductase of Salmonella arizonae (strain ATCC BAA-731 / CDC346-86 / RSK2980).